The sequence spans 340 residues: MQLVGMVALMVGVLVSVAYLVYMERKVMAFMQLRHGPSVVGPWGLLQPFSDALKLLAKECIIPFKSRGWAFFAAPVITFALALAGWAVIPLGATEVIRDGVVVVMPYVVADLNLGVLYVLAISSLEVYGIIMAGWASGSNYAFLGAIRSVSQMISYEMSMGLVMLSVSLCAGSLRLTDIVVARHAMPYWMDLLLLPMAGVFFVSMLAETNRHPFDLPEAESELVSGYNVEYSSMSFAMFFLGEYANMILVSAMMVVLFLGGWYPPLNIHILYYIPGFVWFCSKVFLLLFCFIWVRSTVPRYRYDQLMRLGWKVFLPFSFVWVMVISGVLLWVKALPGMQN.

9 consecutive transmembrane segments (helical) span residues 3–23, 69–89, 102–122, 127–147, 154–174, 186–206, 248–268, 274–294, and 312–332; these read LVGMVALMVGVLVSVAYLVYM, WAFFAAPVITFALALAGWAVI, VVVMPYVVADLNLGVLYVLAI, VYGIIMAGWASGSNYAFLGAI, ISYEMSMGLVMLSVSLCAGSL, MPYWMDLLLLPMAGVFFVSML, ILVSAMMVVLFLGGWYPPLNI, IPGFVWFCSKVFLLLFCFIWV, and KVFLPFSFVWVMVISGVLLWV.

This sequence belongs to the complex I subunit 1 family. As to quaternary structure, NDH-1 is composed of 14 different subunits. Subunits NuoA, H, J, K, L, M, N constitute the membrane sector of the complex.

The protein resides in the cell inner membrane. The catalysed reaction is a quinone + NADH + 5 H(+)(in) = a quinol + NAD(+) + 4 H(+)(out). In terms of biological role, NDH-1 shuttles electrons from NADH, via FMN and iron-sulfur (Fe-S) centers, to quinones in the respiratory chain. The immediate electron acceptor for the enzyme in this species is believed to be ubiquinone. Couples the redox reaction to proton translocation (for every two electrons transferred, four hydrogen ions are translocated across the cytoplasmic membrane), and thus conserves the redox energy in a proton gradient. This subunit may bind ubiquinone. The chain is NADH-quinone oxidoreductase subunit H from Anaplasma phagocytophilum (strain HZ).